The primary structure comprises 391 residues: Aspartic protease 17 (391 aa).

Positions 1 to 15 are cleaved as a signal peptide; sequence MHLIFLLFLAPFCSA. Positions 65 to 385 constitute a Peptidase A1 domain; that stretch reads YLGNFTVGTP…DIGNARIGFA (321 aa). Asparagine 68 is a glycosylation site (N-linked (GlcNAc...) asparagine). Residue aspartate 83 is part of the active site. An N-linked (GlcNAc...) asparagine glycan is attached at asparagine 108. The active site involves aspartate 274. A disulfide bond links cysteine 309 and cysteine 345.

It belongs to the peptidase A1 family. In terms of tissue distribution, expressed in intestinal cells.

It localises to the secreted. In terms of biological role, aspartic proteinase. The protein is Aspartic protease 17 of Caenorhabditis elegans.